Reading from the N-terminus, the 348-residue chain is MSTIEEQLKALREETLASLKQITAGNEKEMQDLRVSVLGKKGSLTEILKGMKDVSAEMRPIIGKHVNEARDVLTAAFEETAKLLEEKKVAAQLASESIDVTLPGRPVATGHRHVLTQTSEEIEDIFIGMGYQVVDGFEVEQDYYNFERMNLPKDHPARDMQDTFYITEEILLRTHTSPVQARAMDAHDFSKGPLKMISPGRVFRRDTDDATHSHQFHQIEGLVVGKNISMADLQGTLQLIVQKMFGEERQIRLRPSYFPFTEPSVEVDVSCFKCGGEGCNVCKKTGWIEIMGAGMVHPRVLEMSGIDATVYSGFAFGLGQERVAMLRYGINDIRGFYQGDVRFSEQFK.

Glu262 is a Mg(2+) binding site.

Belongs to the class-II aminoacyl-tRNA synthetase family. Phe-tRNA synthetase alpha subunit type 1 subfamily. In terms of assembly, tetramer of two alpha and two beta subunits. It depends on Mg(2+) as a cofactor.

The protein resides in the cytoplasm. The enzyme catalyses tRNA(Phe) + L-phenylalanine + ATP = L-phenylalanyl-tRNA(Phe) + AMP + diphosphate + H(+). This Streptococcus pneumoniae (strain 70585) protein is Phenylalanine--tRNA ligase alpha subunit.